Here is a 501-residue protein sequence, read N- to C-terminus: Microtubule-associated protein mmb1 (501 aa).

Polar residues-rich tracts occupy residues 61 to 95 (NISSPSVPTSQSRVTQGQSLGNTQISNPTSKTNNV), 103 to 122 (RNPSQRLRPSTSLARLSNNA), and 132 to 168 (HENSISSKESPSVTTSKHVATITKPSTSSIARMSSNA). Disordered regions lie at residues 61-274 (NISS…VKVN), 328-381 (VSRN…TTGN), and 478-501 (NQTSEINDTNHSSHSSPLDLNRMI). Residues 234-252 (SSVVRPPTRTSTTRPLSRV) are compositionally biased toward low complexity. Composition is skewed to polar residues over residues 253–274 (NVTNASGSISKNSTSPSKVKVN), 367–381 (SRIQSTLSSRTTTGN), and 478–495 (NQTSEINDTNHSSHSSPL).

Its subcellular location is the cytoplasm. The protein resides in the cytoskeleton. Functionally, involved in the cell polarity process and in regulation of microtubule growth. Has a role in meiosis. Involved in microtubule dynamics. Binds to mitochondria and microtubules, attaching the tubular mitochondria to the microtubule lattice at multiple discrete interaction sites. The sequence is that of Microtubule-associated protein mmb1 from Schizosaccharomyces pombe (strain 972 / ATCC 24843) (Fission yeast).